We begin with the raw amino-acid sequence, 198 residues long: Glycerol-3-phosphate acyltransferase (198 aa).

4 helical membrane-spanning segments follow: residues 3-23, 81-101, 113-133, and 153-175; these read VEWLLIPFAYLLGSVSSAVIV, LFAAIGFAAFVGHLYPVFFQF, VLLGFAWPVGLMALLTWIGVA, and YVWLWLGSAELVVATLFMSMLLV.

The protein belongs to the PlsY family. In terms of assembly, probably interacts with PlsX.

The protein resides in the cell inner membrane. It catalyses the reaction an acyl phosphate + sn-glycerol 3-phosphate = a 1-acyl-sn-glycero-3-phosphate + phosphate. It participates in lipid metabolism; phospholipid metabolism. Its function is as follows. Catalyzes the transfer of an acyl group from acyl-phosphate (acyl-PO(4)) to glycerol-3-phosphate (G3P) to form lysophosphatidic acid (LPA). This enzyme utilizes acyl-phosphate as fatty acyl donor, but not acyl-CoA or acyl-ACP. The chain is Glycerol-3-phosphate acyltransferase from Methylococcus capsulatus (strain ATCC 33009 / NCIMB 11132 / Bath).